Reading from the N-terminus, the 238-residue chain is uncharacterized protein (238 aa).

Transmembrane regions (helical) follow at residues 16 to 36, 44 to 64, 81 to 101, and 123 to 143; these read HLIIFSKMLLAMVLGSVIGLE, VGVKTCAIIAVTTCVLTIVSI, PMRLAAQVISGIGFLGAGVIL, and IGIAAGAGFVFDAVIATVMIL.

It belongs to the MgtC/SapB family.

It localises to the cell inner membrane. This is an uncharacterized protein from Haemophilus influenzae (strain ATCC 51907 / DSM 11121 / KW20 / Rd).